A 210-amino-acid polypeptide reads, in one-letter code: Probable molybdenum cofactor guanylyltransferase (210 aa).

Residues Leu-18–Gly-20, Lys-31, Asn-59, Asp-86, and Asp-111 contribute to the GTP site. Residue Asp-111 participates in Mg(2+) binding.

It belongs to the MobA family. Mg(2+) serves as cofactor.

The protein localises to the cytoplasm. The enzyme catalyses Mo-molybdopterin + GTP + H(+) = Mo-molybdopterin guanine dinucleotide + diphosphate. Its function is as follows. Transfers a GMP moiety from GTP to Mo-molybdopterin (Mo-MPT) cofactor (Moco or molybdenum cofactor) to form Mo-molybdopterin guanine dinucleotide (Mo-MGD) cofactor. The chain is Probable molybdenum cofactor guanylyltransferase (nasC) from Haloferax mediterranei (strain ATCC 33500 / DSM 1411 / JCM 8866 / NBRC 14739 / NCIMB 2177 / R-4) (Halobacterium mediterranei).